The chain runs to 234 residues: MGAETMESPSLFLCKGLLLTASLLICWNWSTAALLTSKEMRFSAAEGAKVLLSVPDQEENLLSFSWYKGKDVNENFTIAHYKKSSDSLQLGKKVSGREEIYKDGSMMLRAITLEDTGFYTLQTFKAHGQQEVTHVHLQVYKIVTKPYLQLNHTRLKRKSASILTCVSPDTGVDINWFFNYKPLNATERITLSPEKRELTISPVWRADVGIYLCEVSNSFSSKKSYPLLMALAYG.

The first 32 residues, 1 to 32, serve as a signal peptide directing secretion; the sequence is MGAETMESPSLFLCKGLLLTASLLICWNWSTA. Asn28, Asn75, Asn151, and Asn184 each carry an N-linked (GlcNAc...) asparagine glycan. One can recognise an Ig-like C2-type domain in the interval 146 to 226; that stretch reads PYLQLNHTRL…NSFSSKKSYP (81 aa). Cys165 and Cys213 form a disulfide bridge.

Belongs to the immunoglobulin superfamily. CEA family. In terms of tissue distribution, detected in placenta.

This chain is Cell adhesion molecule CEACAM15, found in Mus musculus (Mouse).